The sequence spans 110 residues: MRYVAAYMLATLGGNEKPSESDLKKILDSVGIEVEKDQLTKVINELKGKNLDEVIAEGEKKLASVPSGGGVAAAAPAAGGGGADPAEAKEEKKEEPEEESDDDMGFGLFD.

The tract at residues 63–110 (ASVPSGGGVAAAAPAAGGGGADPAEAKEEKKEEPEEESDDDMGFGLFD) is disordered. Basic and acidic residues predominate over residues 86–95 (AEAKEEKKEE).

The protein belongs to the eukaryotic ribosomal protein P1/P2 family. As to quaternary structure, P1 and P2 exist as dimers at the large ribosomal subunit. In terms of processing, phosphorylated.

Its function is as follows. Plays an important role in the elongation step of protein synthesis. This chain is Large ribosomal subunit protein P2, found in Cryptochiton stelleri (Giant gumboot chiton).